The following is a 351-amino-acid chain: Photosystem II D2 protein (351 aa).

A helical membrane pass occupies residues 39–59 (TAYLAVGGWFTGTTFVTSWYT). Residue H116 coordinates chlorophyll a. Residues 123 to 139 (GFCLRQFEIARLVGIRP) form a helical membrane-spanning segment. Pheophytin a is bound by residues Q128 and N141. A helical membrane pass occupies residues 151–164 (IFVSVFLLYPLGQA). Chlorophyll a is bound at residue H196. Residues 206–226 (GALLCAIHGATVENTLFEDGD) traverse the membrane as a helical segment. A plastoquinone is bound by residues H213 and F260. Position 213 (H213) interacts with Fe cation. H267 contributes to the Fe cation binding site. A helical membrane pass occupies residues 277–293 (GLWTSAIGIVGLALNLR).

Belongs to the reaction center PufL/M/PsbA/D family. In terms of assembly, PSII is composed of 1 copy each of membrane proteins PsbA, PsbB, PsbC, PsbD, PsbE, PsbF, PsbH, PsbI, PsbJ, PsbK, PsbL, PsbM, PsbT, PsbX, PsbY, PsbZ, Psb30/Ycf12, at least 3 peripheral proteins of the oxygen-evolving complex and a large number of cofactors. It forms dimeric complexes. The D1/D2 heterodimer binds P680, chlorophylls that are the primary electron donor of PSII, and subsequent electron acceptors. It shares a non-heme iron and each subunit binds pheophytin, quinone, additional chlorophylls, carotenoids and lipids. There is also a Cl(-1) ion associated with D1 and D2, which is required for oxygen evolution. The PSII complex binds additional chlorophylls, carotenoids and specific lipids. is required as a cofactor.

The protein localises to the plastid. It localises to the chloroplast thylakoid membrane. The enzyme catalyses 2 a plastoquinone + 4 hnu + 2 H2O = 2 a plastoquinol + O2. Functionally, photosystem II (PSII) is a light-driven water:plastoquinone oxidoreductase that uses light energy to abstract electrons from H(2)O, generating O(2) and a proton gradient subsequently used for ATP formation. It consists of a core antenna complex that captures photons, and an electron transfer chain that converts photonic excitation into a charge separation. The D1/D2 (PsbA/PsbD) reaction center heterodimer binds P680, the primary electron donor of PSII as well as several subsequent electron acceptors. D2 is needed for assembly of a stable PSII complex. The chain is Photosystem II D2 protein from Heterosigma akashiwo (strain NIES-293 / 8280G21-1).